A 369-amino-acid polypeptide reads, in one-letter code: MTTHAAAPSTRVLIVDDSAAARAMFKVIVESDPALQVMAAVPDAFAAARAMRTELPDVILLDLELPGMDGLTFLRKIMQQHPIPVVVCSSHVGAGTEAMVSALELGAREVISKPAARNDLERQEASIRICDAIRAATETTRRRSQPEPRPLAPGPKLTADEILPARPPRPVPETMPVVCIGASTGGTEALRDVLTALPASAPPIVIVQHMPRGFTAAFARRLDSLCAIEVLEAEDEMQVMPGRAIIAQGDRHLLLRRRNQGYRVSVLDGAYVCRHRPSVDVLFRSAAQEAGGNALGVIMTGMGDDGARCMAEMRAAGAETIAQNEESCVVYGMPREAVAHGGVGKVEPLDRLAARIMEFGRRHTERTVR.

Residues 11–128 enclose the Response regulatory domain; it reads RVLIVDDSAA…DLERQEASIR (118 aa). D62 carries the post-translational modification 4-aspartylphosphate. The disordered stretch occupies residues 136–168; sequence ATETTRRRSQPEPRPLAPGPKLTADEILPARPP. Residues 170–358 form the CheB-type methylesterase domain; it reads PVPETMPVVC…LDRLAARIME (189 aa). Catalysis depends on residues S183, H209, and D305.

It belongs to the CheB family. Post-translationally, phosphorylated by CheA. Phosphorylation of the N-terminal regulatory domain activates the methylesterase activity.

The protein resides in the cytoplasm. The enzyme catalyses [protein]-L-glutamate 5-O-methyl ester + H2O = L-glutamyl-[protein] + methanol + H(+). The catalysed reaction is L-glutaminyl-[protein] + H2O = L-glutamyl-[protein] + NH4(+). Functionally, involved in chemotaxis. Part of a chemotaxis signal transduction system that modulates chemotaxis in response to various stimuli. Catalyzes the demethylation of specific methylglutamate residues introduced into the chemoreceptors (methyl-accepting chemotaxis proteins or MCP) by CheR. Also mediates the irreversible deamidation of specific glutamine residues to glutamic acid. This chain is Protein-glutamate methylesterase/protein-glutamine glutaminase 1, found in Cereibacter sphaeroides (strain ATCC 17023 / DSM 158 / JCM 6121 / CCUG 31486 / LMG 2827 / NBRC 12203 / NCIMB 8253 / ATH 2.4.1.) (Rhodobacter sphaeroides).